A 338-amino-acid polypeptide reads, in one-letter code: Malate dehydrogenase, mitochondrial (338 aa).

Residues 1-24 (MLSALARPASAVLRRSFSTSAQNN) constitute a mitochondrion transit peptide. NAD(+)-binding positions include 31–37 (GASGGIG) and D57. O-linked (GlcNAc) serine glycosylation is present at S33. An N6-acetyllysine; alternate mark is found at K78 and K91. An N6-succinyllysine; alternate mark is found at K78 and K91. Residues R104 and R110 each contribute to the substrate site. NAD(+) is bound by residues N117 and 140 to 142 (IAN). Substrate is bound at residue N142. The residue at position 165 (K165) is an N6-acetyllysine. R176 lines the substrate pocket. K185 carries the post-translational modification N6-acetyllysine; alternate. K185 is modified (N6-succinyllysine; alternate). Catalysis depends on H200, which acts as the Proton acceptor. K203 is modified (N6-succinyllysine). K215 and K239 each carry N6-acetyllysine; alternate. K215 and K239 each carry N6-succinyllysine; alternate. K239 is modified (N6-malonyllysine; alternate). At S246 the chain carries Phosphoserine. NAD(+) is bound at residue M251. K269 carries the N6-succinyllysine modification. K296, K301, K307, K314, and K324 each carry N6-acetyllysine; alternate. K296, K301, K307, K314, and K324 each carry N6-succinyllysine; alternate. K307 is subject to N6-malonyllysine; alternate. A Phosphoserine modification is found at S326. N6-acetyllysine; alternate occurs at positions 328, 329, and 335. Residue K328 is modified to N6-succinyllysine; alternate. At K329 the chain carries N6-malonyllysine; alternate. K335 is subject to N6-succinyllysine; alternate.

It belongs to the LDH/MDH superfamily. MDH type 1 family. In terms of assembly, homodimer. Acetylation is enhanced after treatment either with trichostin A (TCA) or with nicotinamide (NAM) with the appearance of tri- and tetraacetylations. Glucose also increases acetylation.

The protein resides in the mitochondrion matrix. It carries out the reaction (S)-malate + NAD(+) = oxaloacetate + NADH + H(+). With respect to regulation, enzyme activity is enhanced by acetylation. The chain is Malate dehydrogenase, mitochondrial (MDH2) from Pongo abelii (Sumatran orangutan).